A 462-amino-acid polypeptide reads, in one-letter code: Cysteine--tRNA ligase (462 aa).

C28 is a Zn(2+) binding site. The 'HIGH' region motif lies at 30–40; that stretch reads MTVYDYCHLGH. Residues C209, H234, and E238 each coordinate Zn(2+). The 'KMSKS' region signature appears at 266–270; it reads KMAKS. K269 is a binding site for ATP.

This sequence belongs to the class-I aminoacyl-tRNA synthetase family. Monomer. Requires Zn(2+) as cofactor.

The protein resides in the cytoplasm. The enzyme catalyses tRNA(Cys) + L-cysteine + ATP = L-cysteinyl-tRNA(Cys) + AMP + diphosphate. In Alkalilimnicola ehrlichii (strain ATCC BAA-1101 / DSM 17681 / MLHE-1), this protein is Cysteine--tRNA ligase.